A 78-amino-acid chain; its full sequence is Large ribosomal subunit protein bL28 (78 aa).

A disordered region spans residues Met1–Ala21.

Belongs to the bacterial ribosomal protein bL28 family.

The chain is Large ribosomal subunit protein bL28 from Shewanella halifaxensis (strain HAW-EB4).